Consider the following 398-residue polypeptide: DNA replication and repair protein RecF (398 aa).

30 to 37 (GRNGFGKT) lines the ATP pocket.

It belongs to the RecF family.

The protein localises to the cytoplasm. The RecF protein is involved in DNA metabolism; it is required for DNA replication and normal SOS inducibility. RecF binds preferentially to single-stranded, linear DNA. It also seems to bind ATP. The protein is DNA replication and repair protein RecF of Corynebacterium efficiens (strain DSM 44549 / YS-314 / AJ 12310 / JCM 11189 / NBRC 100395).